A 418-amino-acid chain; its full sequence is STE20-related kinase adapter protein beta (418 aa).

Positions 58 to 369 (YELQVEIGRG…ASSLLSHVFF (312 aa)) constitute a Protein kinase domain. Residues 64 to 72 (IGRGFDNLT) and Lys89 each bind ATP.

Belongs to the protein kinase superfamily. STE Ser/Thr protein kinase family. STE20 subfamily. Component of a trimeric complex composed of STK11/LKB1, STRAD (STRADA or STRADB) and CAB39/MO25 (CAB39/MO25alpha or CAB39L/MO25beta): the complex tethers STK11/LKB1 in the cytoplasm and stimulates its catalytic activity. Interacts with BIRC4/XIAP. These two proteins are likely to coexist in a complex with TAK1, TRAF6, TAB1 and TAB2. Highly expressed in heart, skeletal muscle, testis, liver and colon.

Its subcellular location is the nucleus. The protein resides in the cytoplasm. Pseudokinase which, in complex with CAB39/MO25 (CAB39/MO25alpha or CAB39L/MO25beta), binds to and activates STK11/LKB1. Adopts a closed conformation typical of active protein kinases and binds STK11/LKB1 as a pseudosubstrate, promoting conformational change of STK11/LKB1 in an active conformation. The protein is STE20-related kinase adapter protein beta (STRADB) of Homo sapiens (Human).